The sequence spans 31 residues: Cytochrome b6-f complex subunit 6 (31 aa).

The chain crosses the membrane as a helical span at residues 4–24 (ITSYFGFLLAVLIITSSLFIG).

Belongs to the PetL family. As to quaternary structure, the 4 large subunits of the cytochrome b6-f complex are cytochrome b6, subunit IV (17 kDa polypeptide, PetD), cytochrome f and the Rieske protein, while the 4 small subunits are PetG, PetL, PetM and PetN. The complex functions as a dimer.

It is found in the plastid. It localises to the chloroplast thylakoid membrane. Its function is as follows. Component of the cytochrome b6-f complex, which mediates electron transfer between photosystem II (PSII) and photosystem I (PSI), cyclic electron flow around PSI, and state transitions. PetL is important for photoautotrophic growth as well as for electron transfer efficiency and stability of the cytochrome b6-f complex. The sequence is that of Cytochrome b6-f complex subunit 6 from Phaseolus vulgaris (Kidney bean).